Here is a 228-residue protein sequence, read N- to C-terminus: Lactate utilization protein A (228 aa).

This sequence belongs to the LutA/YkgE family.

Functionally, is involved in L-lactate degradation and allows cells to grow with lactate as the sole carbon source. In Lysinibacillus sphaericus (strain C3-41), this protein is Lactate utilization protein A.